Here is a 427-residue protein sequence, read N- to C-terminus: ATP synthase subunit beta (427 aa).

160 to 167 (GGAGVGKT) is an ATP binding site.

The protein belongs to the ATPase alpha/beta chains family. As to quaternary structure, F-type ATPases have 2 components, CF(1) - the catalytic core - and CF(0) - the membrane proton channel. CF(1) has five subunits: alpha(3), beta(3), gamma(1), delta(1), epsilon(1). CF(0) has three main subunits: a(1), b(2) and c(9-12). The alpha and beta chains form an alternating ring which encloses part of the gamma chain. CF(1) is attached to CF(0) by a central stalk formed by the gamma and epsilon chains, while a peripheral stalk is formed by the delta and b chains.

The protein localises to the cell membrane. The catalysed reaction is ATP + H2O + 4 H(+)(in) = ADP + phosphate + 5 H(+)(out). Functionally, produces ATP from ADP in the presence of a proton gradient across the membrane. The catalytic sites are hosted primarily by the beta subunits. The polypeptide is ATP synthase subunit beta (Peptococcus niger).